The chain runs to 118 residues: Succinate dehydrogenase assembly factor 1, mitochondrial (118 aa).

Positions 14-16 (LYR) match the LYR motif 1; required for interaction with HSC20 motif. The LYR motif 2; not required for interaction with HSC20 motif lies at 53–55 (LYR). The interval 53 to 65 (LYRRGRRQLQMLR) is interaction with SDHB. The interval 72–118 (MGAFVRTRGPTEESNGAGAPGTLSGEGDDPRKPLDSMRTPKTPLDGR) is disordered.

The protein belongs to the complex I LYR family. SDHAF1 subfamily. As to quaternary structure, interacts with SDHB within an SDHA-SDHB subcomplex. Also interacts with the iron-sulfur transfer complex formed by HSC20, HSPA9 and ISCU through direct binding to HSC20. Binding of SDHAF1 to SDHB precedes and is necessary for recruitment of the iron-sulfur transfer complex by SDHAF1.

It localises to the mitochondrion matrix. Its function is as follows. Plays an essential role in the assembly of succinate dehydrogenase (SDH), an enzyme complex (also referred to as respiratory complex II) that is a component of both the tricarboxylic acid (TCA) cycle and the mitochondrial electron transport chain, and which couples the oxidation of succinate to fumarate with the reduction of ubiquinone (coenzyme Q) to ubiquinol. Promotes maturation of the iron-sulfur protein subunit SDHB of the SDH catalytic dimer, protecting it from the deleterious effects of oxidants. May act together with SDHAF3. Contributes to iron-sulfur cluster incorporation into SDHB by binding to SDHB and recruiting the iron-sulfur transfer complex formed by HSC20, HSPA9 and ISCU through direct binding to HSC20. The protein is Succinate dehydrogenase assembly factor 1, mitochondrial of Bos taurus (Bovine).